Consider the following 203-residue polypeptide: Short chain dehydrogenase/reductase dpmpH (203 aa).

Aspartate 23, tyrosine 77, and lysine 81 together coordinate NADP(+). Tyrosine 77 (proton acceptor) is an active-site residue. The active-site Lowers pKa of active site Tyr is the lysine 81.

The protein belongs to the short-chain dehydrogenases/reductases (SDR) family.

It participates in secondary metabolite biosynthesis; terpenoid biosynthesis. Functionally, short chain dehydrogenase/reductase; part of the gene cluster that mediates the biosynthesis of diterpenoid pyrones. The first step of the pathway is the synthesis of the alpha-pyrone moiety by the polyketide synthase dpmpA via condensation of one acetyl-CoA starter unit with 3 malonyl-CoA units and 2 methylations. The alpha-pyrone is then combined with geranylgeranyl pyrophosphate (GGPP) formed by the GGPP synthase dpmpD through the action of the prenyltransferase dpmpC to yield a linear alpha-pyrone diterpenoid. Subsequent steps in the diterpenoid pyrone biosynthetic pathway involve the decalin core formation, which is initiated by the epoxidation of the C10-C11 olefin by the FAD-dependent oxidoreductase dpmpE, and is followed by a cyclization cascade catalyzed by the terpene cyclase dpmpB. The short chain dehydrogenase/reductase dpmpG then oxidizes the 8S hydroxy group to a ketone and the short chain dehydrogenase/reductase dpmpH reduces the ketone to the 8R hydroxy group to yield higginsianin B. Higginsianin B is further methylated by the methyltransferase dpmpI to produce the intermediate named FDDP B. The cytochrome P450 monooxygenase dpmpJ then oxidizes the C-26 methyl to primary alcohol, producing the final diterpenoid pyrone with a C-26 primary alcohol on the gamma-pyrone moiety named FDDP C. The sequence is that of Short chain dehydrogenase/reductase dpmpH from Macrophomina phaseolina (strain MS6) (Charcoal rot fungus).